The following is a 156-amino-acid chain: Putative type II restriction enzyme ApeKORF2002P (156 aa).

This sequence to M.jannaschii MJ1199.

The enzyme catalyses Endonucleolytic cleavage of DNA to give specific double-stranded fragments with terminal 5'-phosphates.. Its function is as follows. A putative type II restriction enzyme, its methylase would be APE_2002. This is Putative type II restriction enzyme ApeKORF2002P from Aeropyrum pernix (strain ATCC 700893 / DSM 11879 / JCM 9820 / NBRC 100138 / K1).